A 199-amino-acid chain; its full sequence is Transgelin-3 (199 aa).

Residues 24 to 136 (ADLENKLVDW…RTLMALGSVA (113 aa)) enclose the Calponin-homology (CH) domain. S163 is modified (phosphoserine). Residues 174 to 199 (IGLQMGSNKGASQAGMTGYGMPRQIM) form a Calponin-like repeat. Residues 178 to 188 (MGSNKGASQAG) are compositionally biased toward polar residues. The interval 178-199 (MGSNKGASQAGMTGYGMPRQIM) is disordered.

The protein belongs to the calponin family.

This is Transgelin-3 (Tagln3) from Mus musculus (Mouse).